We begin with the raw amino-acid sequence, 296 residues long: Probable 2-(5''-triphosphoribosyl)-3'-dephosphocoenzyme-A synthase (296 aa).

The protein belongs to the CitG/MdcB family.

It carries out the reaction 3'-dephospho-CoA + ATP = 2'-(5''-triphospho-alpha-D-ribosyl)-3'-dephospho-CoA + adenine. In Streptococcus mutans serotype c (strain ATCC 700610 / UA159), this protein is Probable 2-(5''-triphosphoribosyl)-3'-dephosphocoenzyme-A synthase.